The sequence spans 839 residues: Glycerol-3-phosphate acyltransferase (839 aa).

The HXXXXD motif motif lies at 309 to 314 (CHRSHI).

Belongs to the GPAT/DAPAT family.

Its subcellular location is the cell inner membrane. The enzyme catalyses sn-glycerol 3-phosphate + an acyl-CoA = a 1-acyl-sn-glycero-3-phosphate + CoA. It participates in phospholipid metabolism; CDP-diacylglycerol biosynthesis; CDP-diacylglycerol from sn-glycerol 3-phosphate: step 1/3. The protein is Glycerol-3-phosphate acyltransferase of Pseudomonas fluorescens (strain SBW25).